A 75-amino-acid chain; its full sequence is Notewaprin-b (75 aa).

Positions 1-24 (MSSGGLLLLLGLLTLWAELTPVSS) are cleaved as a signal peptide. Residues 27–72 (RPKKPGLCPPRPQKPPCVRECKNDWICPGEQKCCRYGCIYECRDPI) enclose the WAP domain. Disulfide bonds link cysteine 34–cysteine 60, cysteine 43–cysteine 64, cysteine 47–cysteine 59, and cysteine 53–cysteine 68.

It belongs to the venom waprin family. As to expression, expressed by the venom gland.

Its subcellular location is the secreted. Its function is as follows. Damages membranes of susceptible bacteria. Has no hemolytic activity. Not toxic to mice. Does not inhibit the proteinases elastase and cathepsin G. In Notechis scutatus scutatus (Mainland tiger snake), this protein is Notewaprin-b.